Reading from the N-terminus, the 289-residue chain is Urease accessory protein UreD (289 aa).

It belongs to the UreD family. UreD, UreF and UreG form a complex that acts as a GTP-hydrolysis-dependent molecular chaperone, activating the urease apoprotein by helping to assemble the nickel containing metallocenter of UreC. The UreE protein probably delivers the nickel.

The protein resides in the cytoplasm. Functionally, required for maturation of urease via the functional incorporation of the urease nickel metallocenter. In Magnetococcus marinus (strain ATCC BAA-1437 / JCM 17883 / MC-1), this protein is Urease accessory protein UreD.